The primary structure comprises 119 residues: uncharacterized protein (119 aa).

Residues 1–26 form the signal peptide; the sequence is MNKLKRLSMLTVMIASVFIFSSHALA. The region spanning 30-104 is the SH3b domain; sequence YTVSTSSGAP…IVPGFVSDTY (75 aa).

The protein to B.subtilis YraJ.

This is an uncharacterized protein from Bacillus subtilis (strain 168).